Reading from the N-terminus, the 73-residue chain is Large ribosomal subunit protein bL31 (73 aa).

The protein belongs to the bacterial ribosomal protein bL31 family. Type A subfamily. Part of the 50S ribosomal subunit.

Its function is as follows. Binds the 23S rRNA. In Mesorhizobium japonicum (strain LMG 29417 / CECT 9101 / MAFF 303099) (Mesorhizobium loti (strain MAFF 303099)), this protein is Large ribosomal subunit protein bL31.